We begin with the raw amino-acid sequence, 845 residues long: Lon protease (845 aa).

The 198-residue stretch at 45–242 (MPILALRNMI…RLLYLLHKEL (198 aa)) folds into the Lon N-terminal domain. 393-400 (GPPGVGKT) serves as a coordination point for ATP. The 183-residue stretch at 629 to 811 (NGDAGVVIGL…NEVLKEALLE (183 aa)) folds into the Lon proteolytic domain. Residues S717 and K760 contribute to the active site.

This sequence belongs to the peptidase S16 family. Homohexamer. Organized in a ring with a central cavity.

Its subcellular location is the cytoplasm. It carries out the reaction Hydrolysis of proteins in presence of ATP.. ATP-dependent serine protease that mediates the selective degradation of mutant and abnormal proteins as well as certain short-lived regulatory proteins. Required for cellular homeostasis and for survival from DNA damage and developmental changes induced by stress. Degrades polypeptides processively to yield small peptide fragments that are 5 to 10 amino acids long. Binds to DNA in a double-stranded, site-specific manner. The sequence is that of Lon protease from Porphyromonas gingivalis (strain ATCC 33277 / DSM 20709 / CIP 103683 / JCM 12257 / NCTC 11834 / 2561).